A 384-amino-acid polypeptide reads, in one-letter code: Chaperone protein DnaJ (384 aa).

Residues 4–68 (DFYDVLGVSR…EKRQMYDQLG (65 aa)) form the J domain. Disordered stretches follow at residues 74-105 (QAQK…GMGG) and 113-132 (NNLF…QGRD). Over residues 79–105 (GAGGGGGGRGQGNPFGGGGNPFGGMGG) the composition is skewed to gly residues. The CR-type zinc finger occupies 147–229 (GVERDVTIRR…CRGSGRVRRT (83 aa)). Zn(2+) is bound by residues C160, C163, C177, C180, C203, C206, C217, and C220. CXXCXGXG motif repeat units follow at residues 160–167 (CPECDGEG), 177–184 (CSECNGSG), 203–210 (CRACGGEG), and 217–224 (CSECRGSG).

It belongs to the DnaJ family. In terms of assembly, homodimer. Zn(2+) is required as a cofactor.

The protein resides in the cytoplasm. Participates actively in the response to hyperosmotic and heat shock by preventing the aggregation of stress-denatured proteins and by disaggregating proteins, also in an autonomous, DnaK-independent fashion. Unfolded proteins bind initially to DnaJ; upon interaction with the DnaJ-bound protein, DnaK hydrolyzes its bound ATP, resulting in the formation of a stable complex. GrpE releases ADP from DnaK; ATP binding to DnaK triggers the release of the substrate protein, thus completing the reaction cycle. Several rounds of ATP-dependent interactions between DnaJ, DnaK and GrpE are required for fully efficient folding. Also involved, together with DnaK and GrpE, in the DNA replication of plasmids through activation of initiation proteins. The chain is Chaperone protein DnaJ from Haloferax mediterranei (strain ATCC 33500 / DSM 1411 / JCM 8866 / NBRC 14739 / NCIMB 2177 / R-4) (Halobacterium mediterranei).